A 356-amino-acid chain; its full sequence is 3-isopropylmalate dehydrogenase (356 aa).

Residues R95, R105, R133, and D223 each contribute to the substrate site. The Mg(2+) site is built by D223, D247, and D251. 281-293 (GSAPDIAGQNKAN) lines the NAD(+) pocket.

It belongs to the isocitrate and isopropylmalate dehydrogenases family. LeuB type 1 subfamily. As to quaternary structure, homodimer. Requires Mg(2+) as cofactor. The cofactor is Mn(2+).

It is found in the cytoplasm. The enzyme catalyses (2R,3S)-3-isopropylmalate + NAD(+) = 4-methyl-2-oxopentanoate + CO2 + NADH. It participates in amino-acid biosynthesis; L-leucine biosynthesis; L-leucine from 3-methyl-2-oxobutanoate: step 3/4. Its function is as follows. Catalyzes the oxidation of 3-carboxy-2-hydroxy-4-methylpentanoate (3-isopropylmalate) to 3-carboxy-4-methyl-2-oxopentanoate. The product decarboxylates to 4-methyl-2 oxopentanoate. The protein is 3-isopropylmalate dehydrogenase of Neisseria meningitidis serogroup A / serotype 4A (strain DSM 15465 / Z2491).